The sequence spans 363 residues: uncharacterized protein (363 aa).

Positions 109–329 (RAALRELRSR…VEELQAQTRE (221 aa)) form a coiled coil.

This is an uncharacterized protein from Homo sapiens (Human).